A 210-amino-acid chain; its full sequence is MDPTLYCVVAVDTKLGIGKNRCLPWPALRGDMRRFRQLTTDCAPGKQNMVVMGRRTWLSIPAGCRPLAGRINVVLSRTLETPPPGAHFLASSLDAALGLARSPELAQQIDKVWVIGGGNLYREALTGPWPVRLFLTRVLHDFACDVFLSHDSLAAYARVNPKPGEQERVFQERGIFYMFETYIKVTQSSDTALPDLERPRPATPPFSETS.

In terms of domain architecture, DHFR spans 4-184 (TLYCVVAVDT…IFYMFETYIK (181 aa)).

Belongs to the dihydrofolate reductase family.

The catalysed reaction is (6S)-5,6,7,8-tetrahydrofolate + NADP(+) = 7,8-dihydrofolate + NADPH + H(+). This is Putative Dihydrofolate reductase (ORF2) from Human herpesvirus 8 type P (isolate GK18) (HHV-8).